Reading from the N-terminus, the 154-residue chain is Ubiquitin-conjugating enzyme E2 L3 (154 aa).

A UBC core domain is found at 2–149; the sequence is AASRRLMKEL…AEEFTKKYGE (148 aa). Residue C86 is the Glycyl thioester intermediate of the active site. K131 carries the post-translational modification N6-acetyllysine.

The protein belongs to the ubiquitin-conjugating enzyme family. In terms of assembly, interacts with PRKN; involved in ubiquitination and degradation of misfolded proteins. Interacts with UBE3A. Interacts with CCNB1IP1, CBL, ZAP70, RNF19A, RNF19B and RNF144B. Interacts with ARIH1. Interacts with ARIH2 (via RING-type 1). Interacts with NCOA1; they functionally interact to regulate progesterone receptor transcriptional activity. Interacts with NDFIP1 (via N-terminus); the interaction mediates recruitment of UBE2L3 to ITCH and causes MAP3K7 ubiquitination. Post-translationally, ubiquitinated. The alteration of UBE2L3 protein levels during the S-phase of the cell cycle is due to ubiquitin-dependent proteasomal degradation. Autoubiquitinated in vitro.

Its subcellular location is the nucleus. It localises to the cytoplasm. It carries out the reaction S-ubiquitinyl-[E1 ubiquitin-activating enzyme]-L-cysteine + [E2 ubiquitin-conjugating enzyme]-L-cysteine = [E1 ubiquitin-activating enzyme]-L-cysteine + S-ubiquitinyl-[E2 ubiquitin-conjugating enzyme]-L-cysteine.. It participates in protein modification; protein ubiquitination. In terms of biological role, ubiquitin-conjugating enzyme E2 that specifically acts with HECT-type and RBR family E3 ubiquitin-protein ligases. Does not function with most RING-containing E3 ubiquitin-protein ligases because it lacks intrinsic E3-independent reactivity with lysine: in contrast, it has activity with the RBR family E3 enzymes, such as PRKN, RNF31 and ARIH1, that function like RING-HECT hybrids. Accepts ubiquitin from the E1 complex and catalyzes its covalent attachment to other proteins. Mediates ubiquitination by the CUL9-RBX1 complex. In vitro catalyzes 'Lys-11'-linked polyubiquitination. Involved in the selective degradation of short-lived and abnormal proteins. Down-regulated during the S-phase it is involved in progression through the cell cycle. Regulates nuclear hormone receptors transcriptional activity. May play a role in myelopoiesis. In Bos taurus (Bovine), this protein is Ubiquitin-conjugating enzyme E2 L3 (UBE2L3).